Consider the following 210-residue polypeptide: ATP phosphoribosyltransferase (210 aa).

The protein belongs to the ATP phosphoribosyltransferase family. Short subfamily. In terms of assembly, heteromultimer composed of HisG and HisZ subunits.

It is found in the cytoplasm. It catalyses the reaction 1-(5-phospho-beta-D-ribosyl)-ATP + diphosphate = 5-phospho-alpha-D-ribose 1-diphosphate + ATP. It functions in the pathway amino-acid biosynthesis; L-histidine biosynthesis; L-histidine from 5-phospho-alpha-D-ribose 1-diphosphate: step 1/9. Catalyzes the condensation of ATP and 5-phosphoribose 1-diphosphate to form N'-(5'-phosphoribosyl)-ATP (PR-ATP). Has a crucial role in the pathway because the rate of histidine biosynthesis seems to be controlled primarily by regulation of HisG enzymatic activity. This is ATP phosphoribosyltransferase from Caldanaerobacter subterraneus subsp. tengcongensis (strain DSM 15242 / JCM 11007 / NBRC 100824 / MB4) (Thermoanaerobacter tengcongensis).